The primary structure comprises 307 residues: uncharacterized protein (307 aa).

This sequence to B.burgdorferi BB0340.

This is an uncharacterized protein from Treponema pallidum (strain Nichols).